The chain runs to 304 residues: UDP-N-acetylenolpyruvoylglucosamine reductase (304 aa).

One can recognise an FAD-binding PCMH-type domain in the interval 33 to 212 (MGGLADLFLI…KEMMDDLTHK (180 aa)). Arg-176 is an active-site residue. Ser-226 functions as the Proton donor in the catalytic mechanism. Glu-296 is a catalytic residue.

The protein belongs to the MurB family. FAD serves as cofactor.

The protein localises to the cytoplasm. The catalysed reaction is UDP-N-acetyl-alpha-D-muramate + NADP(+) = UDP-N-acetyl-3-O-(1-carboxyvinyl)-alpha-D-glucosamine + NADPH + H(+). It participates in cell wall biogenesis; peptidoglycan biosynthesis. Functionally, cell wall formation. This is UDP-N-acetylenolpyruvoylglucosamine reductase from Exiguobacterium sibiricum (strain DSM 17290 / CCUG 55495 / CIP 109462 / JCM 13490 / 255-15).